The sequence spans 194 residues: N-acetyltransferase (194 aa).

In terms of domain architecture, N-acetyltransferase spans 9 to 173; the sequence is PQVRPGIAED…GRYWDVRWYE (165 aa).

This sequence belongs to the acetyltransferase family. PAT/BAR subfamily.

The chain is N-acetyltransferase (nat) from Streptomyces griseus.